Consider the following 271-residue polypeptide: Cytosolic Fe-S cluster assembly factor NUBP2 (271 aa).

Methionine 1 carries the N-acetylmethionine modification. Glycine 22 to serine 29 is an ATP binding site. Cysteine 196 and cysteine 199 together coordinate [4Fe-4S] cluster.

Belongs to the Mrp/NBP35 ATP-binding proteins family. NUBP2/CFD1 subfamily. Heterotetramer of 2 NUBP1 and 2 NUBP2 chains. Interacts with KIFC1. Interacts with NUBP1. [4Fe-4S] cluster serves as cofactor.

The protein localises to the nucleus. The protein resides in the cytoplasm. Its subcellular location is the cytoskeleton. It is found in the microtubule organizing center. It localises to the centrosome. The protein localises to the cilium axoneme. The protein resides in the centriole. Component of the cytosolic iron-sulfur (Fe/S) protein assembly (CIA) machinery. Required for maturation of extramitochondrial Fe-S proteins. The NUBP1-NUBP2 heterotetramer forms a Fe-S scaffold complex, mediating the de novo assembly of an Fe-S cluster and its transfer to target apoproteins. Negatively regulates cilium formation and structure. This Bos taurus (Bovine) protein is Cytosolic Fe-S cluster assembly factor NUBP2.